We begin with the raw amino-acid sequence, 412 residues long: Small ribosomal subunit protein mL103 (rPPR7) (412 aa).

The N-terminal 14 residues, 1-14, are a transit peptide targeting the mitochondrion; the sequence is MASSRISLRLVRRF. A compositionally biased stretch (polar residues) spans 21–37; it reads GTTTAPSSGKISVSKAK. Positions 21–43 are disordered; that stretch reads GTTTAPSSGKISVSKAKSTLRKE. 8 PPR repeats span residues 101-135, 136-166, 173-207, 208-242, 243-276, 277-311, 312-346, and 347-377; these read EEPF…GTPR, SAVS…IPQR, DKIS…GMEV, TTIA…GCEL, DNAA…GLKP, DTIS…NCAP, NAAT…HKIP, and DFNT…VKKK.

It belongs to the PPR family. P subfamily. In terms of assembly, component of the mitochondrial ribosome small subunit.

The protein localises to the mitochondrion. The polypeptide is Small ribosomal subunit protein mL103 (rPPR7) (Arabidopsis thaliana (Mouse-ear cress)).